A 308-amino-acid polypeptide reads, in one-letter code: GTP cyclohydrolase MptA (308 aa).

Positions 282–308 (NDESIHQHNAHAEREVTLGQLRDELDA) are disordered.

Belongs to the GTP cyclohydrolase IV family. Homodimer. Fe(2+) serves as cofactor.

The catalysed reaction is GTP + H2O = 7,8-dihydroneopterin 2',3'-cyclic phosphate + formate + diphosphate + H(+). The protein operates within cofactor biosynthesis; 5,6,7,8-tetrahydromethanopterin biosynthesis. Functionally, converts GTP to 7,8-dihydro-D-neopterin 2',3'-cyclic phosphate, the first intermediate in the biosynthesis of coenzyme methanopterin. Involved in archaeosine (G(+)) and folate biosynthesis. The sequence is that of GTP cyclohydrolase MptA from Haloferax volcanii (strain ATCC 29605 / DSM 3757 / JCM 8879 / NBRC 14742 / NCIMB 2012 / VKM B-1768 / DS2) (Halobacterium volcanii).